A 302-amino-acid polypeptide reads, in one-letter code: Putative beta-glucosidase 17 (302 aa).

Residues 1–27 (MMAVAAATRIAVVVVAALAALAPGARG) form the signal peptide. A beta-D-glucoside is bound by residues Q47, H149, and 194-195 (NE). E195 (proton donor) is an active-site residue. A disulfide bridge links C214 with C221. N274 is a glycosylation site (N-linked (GlcNAc...) asparagine).

It belongs to the glycosyl hydrolase 1 family.

The enzyme catalyses Hydrolysis of terminal, non-reducing beta-D-glucosyl residues with release of beta-D-glucose.. This Oryza sativa subsp. japonica (Rice) protein is Putative beta-glucosidase 17 (BGLU17).